The sequence spans 274 residues: Type III pantothenate kinase (274 aa).

6-13 contacts ATP; it reads DVRNTHTV. A substrate-binding site is contributed by 109-112; it reads GADR. Aspartate 111 (proton acceptor) is an active-site residue. Aspartate 131 is a K(+) binding site. Serine 134 serves as a coordination point for ATP. Position 186 (threonine 186) interacts with substrate.

Belongs to the type III pantothenate kinase family. Homodimer. NH4(+) serves as cofactor. It depends on K(+) as a cofactor.

It localises to the cytoplasm. It carries out the reaction (R)-pantothenate + ATP = (R)-4'-phosphopantothenate + ADP + H(+). It functions in the pathway cofactor biosynthesis; coenzyme A biosynthesis; CoA from (R)-pantothenate: step 1/5. Its function is as follows. Catalyzes the phosphorylation of pantothenate (Pan), the first step in CoA biosynthesis. The sequence is that of Type III pantothenate kinase from Mycobacterium leprae (strain Br4923).